We begin with the raw amino-acid sequence, 434 residues long: Ribonuclease T2-like (434 aa).

Positions 1 to 18 (MLLKNLHSLLQLPIFSNG) are cleaved as a signal peptide. 5 cysteine pairs are disulfide-bonded: cysteine 27–cysteine 46, cysteine 35–cysteine 94, cysteine 45–cysteine 171, cysteine 102–cysteine 163, and cysteine 241–cysteine 277. Asparagine 37 and asparagine 70 each carry an N-linked (GlcNAc...) asparagine glycan. Residue histidine 87 is part of the active site. Residues asparagine 103 and asparagine 123 are each glycosylated (N-linked (GlcNAc...) asparagine). Active-site residues include glutamate 156 and histidine 160.

The protein belongs to the RNase T2 family. In terms of processing, N-glycosylated.

Its subcellular location is the vacuole lumen. It localises to the cytoplasm. It catalyses the reaction a ribonucleotidyl-ribonucleotide-RNA + H2O = a 3'-end 3'-phospho-ribonucleotide-RNA + a 5'-end dephospho-ribonucleoside-RNA + H(+). Functionally, rnase which modulates cell survival under stress conditions. Released from the vacuole to the cytoplasm during stress to promote tRNA and rRNA cleavage and to activate separately a downstream pathway that promotes cell death. Involved in cell size, vacuolar morphology and growth at high temperatures and high salt concentration. This is Ribonuclease T2-like (RNY1) from Saccharomyces cerevisiae (strain ATCC 204508 / S288c) (Baker's yeast).